Here is a 383-residue protein sequence, read N- to C-terminus: Lipid-A-disaccharide synthase (383 aa).

Belongs to the LpxB family.

It catalyses the reaction a lipid X + a UDP-2-N,3-O-bis[(3R)-3-hydroxyacyl]-alpha-D-glucosamine = a lipid A disaccharide + UDP + H(+). The protein operates within bacterial outer membrane biogenesis; LPS lipid A biosynthesis. In terms of biological role, condensation of UDP-2,3-diacylglucosamine and 2,3-diacylglucosamine-1-phosphate to form lipid A disaccharide, a precursor of lipid A, a phosphorylated glycolipid that anchors the lipopolysaccharide to the outer membrane of the cell. This chain is Lipid-A-disaccharide synthase, found in Anaeromyxobacter sp. (strain K).